Reading from the N-terminus, the 212-residue chain is Adenine phosphoribosyltransferase (212 aa).

This sequence belongs to the purine/pyrimidine phosphoribosyltransferase family. As to quaternary structure, homodimer.

The protein resides in the cytoplasm. The catalysed reaction is AMP + diphosphate = 5-phospho-alpha-D-ribose 1-diphosphate + adenine. Its pathway is purine metabolism; AMP biosynthesis via salvage pathway; AMP from adenine: step 1/1. In terms of biological role, catalyzes a salvage reaction resulting in the formation of AMP, that is energically less costly than de novo synthesis. In Mycobacterium tuberculosis (strain CDC 1551 / Oshkosh), this protein is Adenine phosphoribosyltransferase.